We begin with the raw amino-acid sequence, 347 residues long: Phosphate acyltransferase (347 aa).

The protein belongs to the PlsX family. In terms of assembly, homodimer. Probably interacts with PlsY.

It is found in the cytoplasm. It carries out the reaction a fatty acyl-[ACP] + phosphate = an acyl phosphate + holo-[ACP]. Its pathway is lipid metabolism; phospholipid metabolism. Catalyzes the reversible formation of acyl-phosphate (acyl-PO(4)) from acyl-[acyl-carrier-protein] (acyl-ACP). This enzyme utilizes acyl-ACP as fatty acyl donor, but not acyl-CoA. In Anaplasma marginale (strain St. Maries), this protein is Phosphate acyltransferase.